The chain runs to 405 residues: Acetylornithine/succinyldiaminopimelate aminotransferase (405 aa).

Residues 108–109 and F141 each bind pyridoxal 5'-phosphate; that span reads GT. R144 contacts N(2)-acetyl-L-ornithine. Pyridoxal 5'-phosphate is bound at residue 226-229; that stretch reads DEVQ. At K255 the chain carries N6-(pyridoxal phosphate)lysine. S283 is a N(2)-acetyl-L-ornithine binding site. Residue T284 coordinates pyridoxal 5'-phosphate.

This sequence belongs to the class-III pyridoxal-phosphate-dependent aminotransferase family. ArgD subfamily. In terms of assembly, homodimer. Pyridoxal 5'-phosphate is required as a cofactor.

It is found in the cytoplasm. The enzyme catalyses N(2)-acetyl-L-ornithine + 2-oxoglutarate = N-acetyl-L-glutamate 5-semialdehyde + L-glutamate. It catalyses the reaction N-succinyl-(2S,6S)-2,6-diaminopimelate + 2-oxoglutarate = (S)-2-succinylamino-6-oxoheptanedioate + L-glutamate. The protein operates within amino-acid biosynthesis; L-arginine biosynthesis; N(2)-acetyl-L-ornithine from L-glutamate: step 4/4. It participates in amino-acid biosynthesis; L-lysine biosynthesis via DAP pathway; LL-2,6-diaminopimelate from (S)-tetrahydrodipicolinate (succinylase route): step 2/3. Its function is as follows. Involved in both the arginine and lysine biosynthetic pathways. This Salmonella typhi protein is Acetylornithine/succinyldiaminopimelate aminotransferase.